The primary structure comprises 669 residues: JmjC domain-containing histone demethylation protein 1 (669 aa).

Positions 1–61 (MTAVAASSRV…RRKKPRTELV (61 aa)) are disordered. 2 stretches are compositionally biased toward polar residues: residues 16 to 27 (ASSSAHPRTLRS) and 36 to 49 (HDSS…QSKQ). The PHD-type zinc finger occupies 65 to 126 (ELDCAACPAV…KWYCQPCITR (62 aa)). Disordered regions lie at residues 131–150 (FESG…RPPR) and 220–256 (PPDR…QATH). The span at 246–255 (KPARAKKQAT) shows a compositional bias: basic residues. The 163-residue stretch at 332–494 (VTGTPMQAYV…TQWKLVEIEE (163 aa)) folds into the JmjC domain. His390 and Asp392 together coordinate Fe cation. Lys407 is a substrate binding site. A Fe cation-binding site is contributed by His462.

Belongs to the JHDM1 histone demethylase family. The cofactor is Fe(2+).

The protein resides in the nucleus. The catalysed reaction is N(6),N(6)-dimethyl-L-lysyl(36)-[histone H3] + 2 2-oxoglutarate + 2 O2 = L-lysyl(36)-[histone H3] + 2 formaldehyde + 2 succinate + 2 CO2. Histone demethylase that specifically demethylates 'Lys-36' of histone H3, thereby playing a central role in histone code. The protein is JmjC domain-containing histone demethylation protein 1 (JHD1) of Mycosarcoma maydis (Corn smut fungus).